We begin with the raw amino-acid sequence, 72 residues long: DNA-directed RNA polymerase subunit Rpo10 (72 aa).

Residues cysteine 7, cysteine 10, cysteine 53, and cysteine 54 each coordinate Zn(2+).

This sequence belongs to the archaeal Rpo10/eukaryotic RPB10 RNA polymerase subunit family. As to quaternary structure, part of the RNA polymerase complex. Zn(2+) is required as a cofactor.

It is found in the cytoplasm. The catalysed reaction is RNA(n) + a ribonucleoside 5'-triphosphate = RNA(n+1) + diphosphate. In terms of biological role, DNA-dependent RNA polymerase (RNAP) catalyzes the transcription of DNA into RNA using the four ribonucleoside triphosphates as substrates. The sequence is that of DNA-directed RNA polymerase subunit Rpo10 from Thermoplasma volcanium (strain ATCC 51530 / DSM 4299 / JCM 9571 / NBRC 15438 / GSS1).